The primary structure comprises 102 residues: Small ribosomal subunit protein uS10 (102 aa).

This sequence belongs to the universal ribosomal protein uS10 family. As to quaternary structure, part of the 30S ribosomal subunit.

Involved in the binding of tRNA to the ribosomes. This is Small ribosomal subunit protein uS10 from Levilactobacillus brevis (strain ATCC 367 / BCRC 12310 / CIP 105137 / JCM 1170 / LMG 11437 / NCIMB 947 / NCTC 947) (Lactobacillus brevis).